Reading from the N-terminus, the 295-residue chain is Small ribosomal subunit protein uS2B (295 aa).

The residue at position 2 (S2) is an N-acetylserine. The tract at residues 54–113 (TWEKLLLAARAIVAIENPADVSVISSRNTGQRAVLKFAAATGATPIAGRFTPGTFTNQIQ) is interaction with PPP1R16B. Laminin-binding stretches follow at residues 161–180 (IPCN…MLAR) and 205–229 (RDPE…EFQG). The segment covering 218-227 (AEKAVTKEEF) has biased composition (basic and acidic residues). Positions 218-242 (AEKAVTKEEFQGEWTAPSPEFTATQ) are disordered. [DE]-W-[ST] repeat units follow at residues 230-232 (EWT), 247-249 (DWS), 266-268 (DWS), 275-277 (DWS), and 293-295 (DWS). The laminin-binding stretch occupies residues 242–295 (QPEVADWSEGVQVPSVPIQQFPTEDWSAQPATEDWSAAPTAQATEWVGATTDWS). A disordered region spans residues 266 to 295 (DWSAQPATEDWSAAPTAQATEWVGATTDWS).

Belongs to the universal ribosomal protein uS2 family. As to quaternary structure, monomer (37LRP) and homodimer (67LR). Component of the small ribosomal subunit. Mature ribosomes consist of a small (40S) and a large (60S) subunit. The 40S subunit contains about 33 different proteins and 1 molecule of RNA (18S). The 60S subunit contains about 49 different proteins and 3 molecules of RNA (28S, 5.8S and 5S). Interacts with RPS21. Interacts with several laminins including at least LAMB1. Interacts with MDK. The mature dimeric form interacts with PPP1R16B (via its fourth ankyrin repeat). Interacts with PPP1CA only in the presence of PPP1R16B. In terms of processing, acylated. Acylation may be a prerequisite for conversion of the monomeric 37 kDa laminin receptor precursor (37LRP) to the mature dimeric 67 kDa laminin receptor (67LR), and may provide a mechanism for membrane association. Cleaved by stromelysin-3 (ST3) at the cell surface. Cleavage by stromelysin-3 may be a mechanism to alter cell-extracellular matrix interactions.

It localises to the cell membrane. Its subcellular location is the cytoplasm. The protein resides in the nucleus. Required for the assembly and/or stability of the 40S ribosomal subunit. Required for the processing of the 20S rRNA-precursor to mature 18S rRNA in a late step of the maturation of 40S ribosomal subunits. Also functions as a cell surface receptor for laminin. Plays a role in cell adhesion to the basement membrane and in the consequent activation of signaling transduction pathways. May play a role in cell fate determination and tissue morphogenesis. Also acts as a receptor for several other ligands, including the pathogenic prion protein, viruses, and bacteria. Acts as a PPP1R16B-dependent substrate of PPP1CA. The protein is Small ribosomal subunit protein uS2B of Homo sapiens (Human).